A 292-amino-acid chain; its full sequence is MFTGSIVALVTPMDDKGNVCRSSLKKLIDYHVASGTSAIVSVGTTGESATLSHDEHGDVVMMTLELADGRIPVIAGTGANATAEAISLTQRFNDSGVVGCLTVTPYYNRPTQEGLYQHFKAIAEHTDLPQILYNVPSRTGCDMLPETVGRLAKVKNIVAIKEATGNLSRVHQIKELVSDDFLLLSGDDATGLDFMQLGGHGVISVTANVAARDMAEMCRLAAEGQFAEARVINQRLMPLHNKLFVEPNPIPVKWACKELGLVATDTLRLPMTPITDNGKEIVRAALKHAGLL.

Threonine 45 contacts pyruvate. Catalysis depends on tyrosine 133, which acts as the Proton donor/acceptor. Lysine 161 acts as the Schiff-base intermediate with substrate in catalysis. Isoleucine 203 provides a ligand contact to pyruvate.

The protein belongs to the DapA family. As to quaternary structure, homotetramer; dimer of dimers.

It localises to the cytoplasm. It carries out the reaction L-aspartate 4-semialdehyde + pyruvate = (2S,4S)-4-hydroxy-2,3,4,5-tetrahydrodipicolinate + H2O + H(+). It functions in the pathway amino-acid biosynthesis; L-lysine biosynthesis via DAP pathway; (S)-tetrahydrodipicolinate from L-aspartate: step 3/4. In terms of biological role, catalyzes the condensation of (S)-aspartate-beta-semialdehyde [(S)-ASA] and pyruvate to 4-hydroxy-tetrahydrodipicolinate (HTPA). This Escherichia fergusonii (strain ATCC 35469 / DSM 13698 / CCUG 18766 / IAM 14443 / JCM 21226 / LMG 7866 / NBRC 102419 / NCTC 12128 / CDC 0568-73) protein is 4-hydroxy-tetrahydrodipicolinate synthase.